The chain runs to 171 residues: Peptide methionine sulfoxide reductase MsrA (171 aa).

Cysteine 13 is an active-site residue.

Belongs to the MsrA Met sulfoxide reductase family.

The catalysed reaction is L-methionyl-[protein] + [thioredoxin]-disulfide + H2O = L-methionyl-(S)-S-oxide-[protein] + [thioredoxin]-dithiol. It catalyses the reaction [thioredoxin]-disulfide + L-methionine + H2O = L-methionine (S)-S-oxide + [thioredoxin]-dithiol. Its function is as follows. Has an important function as a repair enzyme for proteins that have been inactivated by oxidation. Catalyzes the reversible oxidation-reduction of methionine sulfoxide in proteins to methionine. This is Peptide methionine sulfoxide reductase MsrA from Mycolicibacterium paratuberculosis (strain ATCC BAA-968 / K-10) (Mycobacterium paratuberculosis).